The chain runs to 220 residues: Ribosomal RNA large subunit methyltransferase E (220 aa).

Residues 1–10 (MSRSGKDPGK) are compositionally biased toward basic and acidic residues. Residues 1–24 (MSRSGKDPGKRVKTARKRSASSTR) form a disordered region. S-adenosyl-L-methionine contacts are provided by Gly75, Trp77, Asp94, Asp110, and Asp134. Lys174 (proton acceptor) is an active-site residue.

This sequence belongs to the class I-like SAM-binding methyltransferase superfamily. RNA methyltransferase RlmE family.

The protein resides in the cytoplasm. It catalyses the reaction uridine(2552) in 23S rRNA + S-adenosyl-L-methionine = 2'-O-methyluridine(2552) in 23S rRNA + S-adenosyl-L-homocysteine + H(+). In terms of biological role, specifically methylates the uridine in position 2552 of 23S rRNA at the 2'-O position of the ribose in the fully assembled 50S ribosomal subunit. The chain is Ribosomal RNA large subunit methyltransferase E from Erythrobacter litoralis (strain HTCC2594).